A 273-amino-acid chain; its full sequence is NADPH-dependent 7-cyano-7-deazaguanine reductase (273 aa).

Residue 80–82 (VES) coordinates substrate. An NADPH-binding site is contributed by 82–83 (SK). Cysteine 180 functions as the Thioimide intermediate in the catalytic mechanism. The active-site Proton donor is the aspartate 187. Residue 219–220 (HE) coordinates substrate. 248–249 (RG) contacts NADPH.

This sequence belongs to the GTP cyclohydrolase I family. QueF type 2 subfamily. Homodimer.

It is found in the cytoplasm. The enzyme catalyses 7-aminomethyl-7-carbaguanine + 2 NADP(+) = 7-cyano-7-deazaguanine + 2 NADPH + 3 H(+). The protein operates within tRNA modification; tRNA-queuosine biosynthesis. In terms of biological role, catalyzes the NADPH-dependent reduction of 7-cyano-7-deazaguanine (preQ0) to 7-aminomethyl-7-deazaguanine (preQ1). In Bordetella parapertussis (strain 12822 / ATCC BAA-587 / NCTC 13253), this protein is NADPH-dependent 7-cyano-7-deazaguanine reductase.